We begin with the raw amino-acid sequence, 224 residues long: Uridylate kinase (224 aa).

An ATP-binding site is contributed by 6–10; that stretch reads KVTGK. Gly-41 contacts UMP. The ATP site is built by Gly-42 and Arg-46. UMP is bound by residues Asp-63 and 111 to 117; that span reads FQPGQST. The ATP site is built by Thr-137, Phe-143, and Asp-146.

This sequence belongs to the UMP kinase family. As to quaternary structure, homohexamer.

The protein resides in the cytoplasm. The enzyme catalyses UMP + ATP = UDP + ADP. It functions in the pathway pyrimidine metabolism; CTP biosynthesis via de novo pathway; UDP from UMP (UMPK route): step 1/1. Its activity is regulated as follows. Inhibited by UTP. Its function is as follows. Catalyzes the reversible phosphorylation of UMP to UDP. This chain is Uridylate kinase, found in Metallosphaera sedula (strain ATCC 51363 / DSM 5348 / JCM 9185 / NBRC 15509 / TH2).